A 180-amino-acid polypeptide reads, in one-letter code: Regulator of G-protein signaling 8 (180 aa).

A Phosphoserine modification is found at Ser-26. One can recognise an RGS domain in the interval 56-171; that stretch reads SFDVLLSHKY…FLRSKMYLDL (116 aa).

As to quaternary structure, interacts with GNAO1 and GNAI3.

Its subcellular location is the cell membrane. It localises to the membrane. It is found in the perikaryon. The protein localises to the cell projection. The protein resides in the dendrite. Its subcellular location is the nucleus. Its function is as follows. Regulates G protein-coupled receptor signaling cascades, including signaling via muscarinic acetylcholine receptor CHRM2 and dopamine receptor DRD2. Inhibits signal transduction by increasing the GTPase activity of G protein alpha subunits, thereby driving them into their inactive GDP-bound form. Modulates the activity of potassium channels that are activated in response to DRD2 and CHRM2 signaling. The sequence is that of Regulator of G-protein signaling 8 (Rgs8) from Mus musculus (Mouse).